The chain runs to 201 residues: NAD(P)H dehydrogenase (quinone) (201 aa).

One can recognise a Flavodoxin-like domain in the interval 4–192 (VLVLYYSSYG…TIARFQGQHI (189 aa)). FMN-binding positions include 10–15 (SSYGHV) and 80–82 (TRF). Tyr12 provides a ligand contact to NAD(+). Residue Trp100 coordinates substrate. FMN contacts are provided by residues 115 to 121 (STASQHG) and His136.

This sequence belongs to the WrbA family. It depends on FMN as a cofactor.

It catalyses the reaction a quinone + NADH + H(+) = a quinol + NAD(+). The enzyme catalyses a quinone + NADPH + H(+) = a quinol + NADP(+). This chain is NAD(P)H dehydrogenase (quinone), found in Chromohalobacter salexigens (strain ATCC BAA-138 / DSM 3043 / CIP 106854 / NCIMB 13768 / 1H11).